We begin with the raw amino-acid sequence, 401 residues long: uncharacterized protein (401 aa).

[4Fe-4S] cluster is bound by residues cysteine 7, cysteine 13, cysteine 16, and cysteine 94. Positions 230, 259, 280, and 328 each coordinate S-adenosyl-L-methionine. Catalysis depends on cysteine 355, which acts as the Nucleophile.

The protein belongs to the class I-like SAM-binding methyltransferase superfamily. RNA M5U methyltransferase family.

This is an uncharacterized protein from Chlamydia pneumoniae (Chlamydophila pneumoniae).